The sequence spans 727 residues: Sodium-dependent neutral amino acid transporter SLC6A17 (727 aa).

The Cytoplasmic segment spans residues methionine 1 to tyrosine 69. Residues serine 13 and serine 20 each carry the phosphoserine modification. A helical membrane pass occupies residues isoleucine 70 to cysteine 90. Topologically, residues glutamine 91–glycine 95 are extracellular. A helical membrane pass occupies residues glycine 96–leucine 116. Residues glutamate 117–cysteine 147 lie on the Cytoplasmic side of the membrane. Residues isoleucine 148–phenylalanine 168 traverse the membrane as a helical segment. The Extracellular portion of the chain corresponds to phenylalanine 169–glycine 222. Asparagine 186 carries N-linked (GlcNAc...) asparagine glycosylation. The chain crosses the membrane as a helical span at residues leucine 223–valine 243. Topologically, residues lysine 244–methionine 253 are cytoplasmic. A helical membrane pass occupies residues tyrosine 254–leucine 274. Residues arginine 275 to glutamate 300 are Extracellular-facing. Residues alanine 301–serine 321 form a helical membrane-spanning segment. The Cytoplasmic segment spans residues tyrosine 322 to alanine 334. Residues leucine 335–leucine 355 form a helical membrane-spanning segment. At glycine 356–valine 460 the chain is on the extracellular side. Tyrosine 377 carries the phosphotyrosine modification. A glycan (N-linked (GlcNAc...) asparagine) is linked at asparagine 393. Residues methionine 461–isoleucine 481 form a helical membrane-spanning segment. The Cytoplasmic portion of the chain corresponds to threonine 482–lysine 490. Residues valine 491–phenylalanine 511 traverse the membrane as a helical segment. Residues valine 512 to serine 527 are Extracellular-facing. A helical transmembrane segment spans residues alanine 528–glycine 548. Residues threonine 549–lysine 573 lie on the Cytoplasmic side of the membrane. A helical membrane pass occupies residues phenylalanine 574 to threonine 594. The Extracellular portion of the chain corresponds to proline 595–alanine 617. The helical transmembrane segment at methionine 618–leucine 638 threads the bilayer. Residues arginine 639–leucine 727 lie on the Cytoplasmic side of the membrane. 2 positions are modified to phosphoserine: serine 665 and serine 701. The disordered stretch occupies residues valine 680–leucine 727. The segment covering glycine 698 to proline 709 has biased composition (polar residues).

This sequence belongs to the sodium:neurotransmitter symporter (SNF) (TC 2.A.22) family.

Its subcellular location is the cytoplasmic vesicle. The protein localises to the secretory vesicle. It is found in the synaptic vesicle membrane. It localises to the postsynapse. The protein resides in the presynapse. It catalyses the reaction L-proline(in) + Na(+)(in) = L-proline(out) + Na(+)(out). It carries out the reaction L-leucine(in) + Na(+)(in) = L-leucine(out) + Na(+)(out). The enzyme catalyses glycine(in) + Na(+)(in) = glycine(out) + Na(+)(out). The catalysed reaction is L-alanine(in) + Na(+)(in) = L-alanine(out) + Na(+)(out). It catalyses the reaction L-glutamine(in) + Na(+)(in) = L-glutamine(out) + Na(+)(out). In terms of biological role, synaptic vesicle transporter with apparent selectivity for neutral amino acids. The transport is sodium-coupled but chloride-independent, likely driven by the proton electrochemical gradient generated by vacuolar H(+)-ATPase in an overall electrogenic mechanism. May contribute to the synaptic uptake of neurotransmitter precursors in a process coupled in part to vesicle exocytosis. The polypeptide is Sodium-dependent neutral amino acid transporter SLC6A17 (Homo sapiens (Human)).